A 539-amino-acid chain; its full sequence is T-complex protein 1 subunit delta (539 aa).

A disordered region spans residues 1 to 29; sequence MPENVAPRSGATAGAAGGRGKGAYQDRDK. Arg-19 bears the Omega-N-methylarginine mark. Position 21 is an N6-acetyllysine (Lys-21). Ser-36 carries the phosphoserine modification. Gly-53 lines the ADP pocket. Gly-53 lines the ATP pocket. Position 104 (Asp-104) interacts with Mg(2+). ADP-binding residues include Gly-105, Thr-106, Thr-107, Ser-108, Asn-172, Ser-173, and Lys-174. ATP-binding residues include Gly-105 and Thr-106. Lys-174 provides a ligand contact to ATP. Phosphoserine is present on residues Ser-184 and Ser-202. Lys-288, Lys-302, Lys-319, and Lys-326 each carry N6-acetyllysine. An ADP-binding site is contributed by Gly-425. Position 444 is a phosphoserine (Ser-444). An ADP-binding site is contributed by Gln-510.

Belongs to the TCP-1 chaperonin family. In terms of assembly, component of the chaperonin-containing T-complex (TRiC), a hexadecamer composed of two identical back-to-back stacked rings enclosing a protein folding chamber. Each ring is made up of eight different subunits: TCP1/CCT1, CCT2, CCT3, CCT4, CCT5, CCT6A/CCT6, CCT7, CCT8. Interacts with PACRG. Interacts with DNAAF4. Interacts with DLEC1.

The protein resides in the cytoplasm. It localises to the melanosome. The protein localises to the cytoskeleton. It is found in the microtubule organizing center. Its subcellular location is the centrosome. The protein resides in the cilium basal body. The catalysed reaction is ATP + H2O = ADP + phosphate + H(+). Its function is as follows. Component of the chaperonin-containing T-complex (TRiC), a molecular chaperone complex that assists the folding of actin, tubulin and other proteins upon ATP hydrolysis. The TRiC complex mediates the folding of WRAP53/TCAB1, thereby regulating telomere maintenance. As part of the TRiC complex may play a role in the assembly of BBSome, a complex involved in ciliogenesis regulating transports vesicles to the cilia. The chain is T-complex protein 1 subunit delta (CCT4) from Homo sapiens (Human).